Reading from the N-terminus, the 424-residue chain is Mitogen-activated protein kinase mpkA (424 aa).

Residues 23–314 (YNVTKELGQG…VEEALEHPYL (292 aa)) form the Protein kinase domain. ATP contacts are provided by residues 29–37 (LGQGAYGIV) and Lys52. Positions 375–424 (QQIAQQTNVPIPDHQQGGWKQEEPKPQEVHAAGGHVNDLESSLQRGMDVQ) are disordered.

Belongs to the protein kinase superfamily. Ser/Thr protein kinase family. Interacts with flbB, flbC, brlA, and rasB. Interacts with fmqA and fmqC. Interacts with hsp90. It depends on Mg(2+) as a cofactor. Post-translationally, phosphorylated by the upstreamm MAPKK mkk2. Phosphorylation is induced during asexual development. Phosphorylation is regulated by rlmA.

It carries out the reaction L-seryl-[protein] + ATP = O-phospho-L-seryl-[protein] + ADP + H(+). The catalysed reaction is L-threonyl-[protein] + ATP = O-phospho-L-threonyl-[protein] + ADP + H(+). Activated by threonine and tyrosine phosphorylation by the upstreamm MAPKK mkk2. Functionally, mitogen-activated protein kinase; part of cell wall integrity (CWI) signaling pathway composed of pkcA, the bck1-mkk2-mpka MAPK cascade and the downstream rlmA transcription regulator. The CWI signaling pathway regulates cell wall integrity and pyomelanin formation. CWI also controls oxidative stress response, gliotoxin production, iron adaptation and asexual development. Finally, CWI is constitutively required for A.fumigatus to cope with the temperature increase found in the mammalian lung environment, during infection. MpkA positively modulates the expression of fumiquinazoline cluster during conidiogenesis and directly phosphorylates fmqC, and perhaps also fmqA. The chain is Mitogen-activated protein kinase mpkA from Aspergillus fumigatus (strain ATCC MYA-4609 / CBS 101355 / FGSC A1100 / Af293) (Neosartorya fumigata).